Here is a 133-residue protein sequence, read N- to C-terminus: Transcription antitermination protein NusB (133 aa).

It belongs to the NusB family.

Functionally, involved in transcription antitermination. Required for transcription of ribosomal RNA (rRNA) genes. Binds specifically to the boxA antiterminator sequence of the ribosomal RNA (rrn) operons. The chain is Transcription antitermination protein NusB from Shewanella denitrificans (strain OS217 / ATCC BAA-1090 / DSM 15013).